The following is a 904-amino-acid chain: Essential for maintenance of the cell wall protein 1 (904 aa).

6 TPR repeats span residues 510–544 (WQLD…ETAL), 563–596 (INEN…GKYV), 603–636 (AKYY…YPLS), 637–670 (FETW…DPYH), 671–704 (ALSW…DAQK), and 706–739 (WKIW…RRDK).

Belongs to the TTC27 family.

The protein resides in the cytoplasm. Its subcellular location is the nucleus. Its function is as follows. Required for the maintenance of the cell wall integrity. The polypeptide is Essential for maintenance of the cell wall protein 1 (EMW1) (Saccharomyces cerevisiae (strain ATCC 204508 / S288c) (Baker's yeast)).